Here is a 201-residue protein sequence, read N- to C-terminus: Dephospho-CoA kinase (201 aa).

Residues Ile4 to Asp201 form the DPCK domain. Ala12–Thr17 contributes to the ATP binding site.

It belongs to the CoaE family.

The protein resides in the cytoplasm. It catalyses the reaction 3'-dephospho-CoA + ATP = ADP + CoA + H(+). The protein operates within cofactor biosynthesis; coenzyme A biosynthesis; CoA from (R)-pantothenate: step 5/5. Catalyzes the phosphorylation of the 3'-hydroxyl group of dephosphocoenzyme A to form coenzyme A. In Streptococcus pneumoniae (strain ATCC BAA-255 / R6), this protein is Dephospho-CoA kinase.